The chain runs to 613 residues: Dihydroxy-acid dehydratase (613 aa).

Asp-81 contacts Mg(2+). Cys-122 is a [2Fe-2S] cluster binding site. Residues Asp-123 and Lys-124 each contribute to the Mg(2+) site. An N6-carboxylysine modification is found at Lys-124. Cys-193 lines the [2Fe-2S] cluster pocket. Glu-489 lines the Mg(2+) pocket. Ser-515 acts as the Proton acceptor in catalysis.

It belongs to the IlvD/Edd family. Homodimer. Requires [2Fe-2S] cluster as cofactor. It depends on Mg(2+) as a cofactor.

It carries out the reaction (2R)-2,3-dihydroxy-3-methylbutanoate = 3-methyl-2-oxobutanoate + H2O. The enzyme catalyses (2R,3R)-2,3-dihydroxy-3-methylpentanoate = (S)-3-methyl-2-oxopentanoate + H2O. It participates in amino-acid biosynthesis; L-isoleucine biosynthesis; L-isoleucine from 2-oxobutanoate: step 3/4. It functions in the pathway amino-acid biosynthesis; L-valine biosynthesis; L-valine from pyruvate: step 3/4. Functions in the biosynthesis of branched-chain amino acids. Catalyzes the dehydration of (2R,3R)-2,3-dihydroxy-3-methylpentanoate (2,3-dihydroxy-3-methylvalerate) into 2-oxo-3-methylpentanoate (2-oxo-3-methylvalerate) and of (2R)-2,3-dihydroxy-3-methylbutanoate (2,3-dihydroxyisovalerate) into 2-oxo-3-methylbutanoate (2-oxoisovalerate), the penultimate precursor to L-isoleucine and L-valine, respectively. This chain is Dihydroxy-acid dehydratase, found in Pseudomonas fluorescens (strain ATCC BAA-477 / NRRL B-23932 / Pf-5).